Reading from the N-terminus, the 197-residue chain is FMN-dependent NADH:quinone oxidoreductase (197 aa).

FMN is bound by residues S10 and 16–18 (SIS).

The protein belongs to the azoreductase type 1 family. In terms of assembly, homodimer. FMN serves as cofactor.

It carries out the reaction 2 a quinone + NADH + H(+) = 2 a 1,4-benzosemiquinone + NAD(+). The catalysed reaction is N,N-dimethyl-1,4-phenylenediamine + anthranilate + 2 NAD(+) = 2-(4-dimethylaminophenyl)diazenylbenzoate + 2 NADH + 2 H(+). Functionally, quinone reductase that provides resistance to thiol-specific stress caused by electrophilic quinones. Also exhibits azoreductase activity. Catalyzes the reductive cleavage of the azo bond in aromatic azo compounds to the corresponding amines. This Erythrobacter litoralis (strain HTCC2594) protein is FMN-dependent NADH:quinone oxidoreductase.